We begin with the raw amino-acid sequence, 242 residues long: UPF0246 protein SSA_1395 (242 aa).

Belongs to the UPF0246 family.

This chain is UPF0246 protein SSA_1395, found in Streptococcus sanguinis (strain SK36).